The following is a 129-amino-acid chain: NADPH-dependent 7-cyano-7-deazaguanine reductase (129 aa).

Catalysis depends on C34, which acts as the Thioimide intermediate. D41 (proton donor) is an active-site residue. Residues 56-58 (VEL) and 75-76 (HE) each bind substrate.

This sequence belongs to the GTP cyclohydrolase I family. QueF type 1 subfamily.

It is found in the cytoplasm. The enzyme catalyses 7-aminomethyl-7-carbaguanine + 2 NADP(+) = 7-cyano-7-deazaguanine + 2 NADPH + 3 H(+). It functions in the pathway tRNA modification; tRNA-queuosine biosynthesis. Its function is as follows. Catalyzes the NADPH-dependent reduction of 7-cyano-7-deazaguanine (preQ0) to 7-aminomethyl-7-deazaguanine (preQ1). In Nitrosococcus oceani (strain ATCC 19707 / BCRC 17464 / JCM 30415 / NCIMB 11848 / C-107), this protein is NADPH-dependent 7-cyano-7-deazaguanine reductase.